A 235-amino-acid chain; its full sequence is Pyridoxine 5'-phosphate synthase (235 aa).

Asn6 is a 3-amino-2-oxopropyl phosphate binding site. 8–9 (DH) serves as a coordination point for 1-deoxy-D-xylulose 5-phosphate. Arg17 contacts 3-amino-2-oxopropyl phosphate. His42 (proton acceptor) is an active-site residue. 1-deoxy-D-xylulose 5-phosphate-binding residues include Arg44 and His49. Glu69 acts as the Proton acceptor in catalysis. Position 99 (Thr99) interacts with 1-deoxy-D-xylulose 5-phosphate. His189 acts as the Proton donor in catalysis. 3-amino-2-oxopropyl phosphate-binding positions include Gly190 and 211–212 (GH).

Belongs to the PNP synthase family. Homooctamer; tetramer of dimers.

It is found in the cytoplasm. The enzyme catalyses 3-amino-2-oxopropyl phosphate + 1-deoxy-D-xylulose 5-phosphate = pyridoxine 5'-phosphate + phosphate + 2 H2O + H(+). It functions in the pathway cofactor biosynthesis; pyridoxine 5'-phosphate biosynthesis; pyridoxine 5'-phosphate from D-erythrose 4-phosphate: step 5/5. Its function is as follows. Catalyzes the complicated ring closure reaction between the two acyclic compounds 1-deoxy-D-xylulose-5-phosphate (DXP) and 3-amino-2-oxopropyl phosphate (1-amino-acetone-3-phosphate or AAP) to form pyridoxine 5'-phosphate (PNP) and inorganic phosphate. This chain is Pyridoxine 5'-phosphate synthase, found in Chlorobium phaeovibrioides (strain DSM 265 / 1930) (Prosthecochloris vibrioformis (strain DSM 265)).